The sequence spans 235 residues: Elongation factor Tu (235 aa).

The 125-residue stretch at 1–125 (KNMITGATQM…DGDKYIPTPS (125 aa)) folds into the tr-type G domain. Residue 47–50 (NKQD) participates in GTP binding.

The protein belongs to the TRAFAC class translation factor GTPase superfamily. Classic translation factor GTPase family. EF-Tu/EF-1A subfamily. As to quaternary structure, monomer.

It is found in the cytoplasm. The catalysed reaction is GTP + H2O = GDP + phosphate + H(+). GTP hydrolase that promotes the GTP-dependent binding of aminoacyl-tRNA to the A-site of ribosomes during protein biosynthesis. The polypeptide is Elongation factor Tu (tufA) (Leptolyngbya boryana (Plectonema boryanum)).